The sequence spans 157 residues: Small ribosomal subunit protein uS7 (157 aa).

Belongs to the universal ribosomal protein uS7 family. Part of the 30S ribosomal subunit. Contacts proteins S9 and S11.

One of the primary rRNA binding proteins, it binds directly to 16S rRNA where it nucleates assembly of the head domain of the 30S subunit. Is located at the subunit interface close to the decoding center, probably blocks exit of the E-site tRNA. The polypeptide is Small ribosomal subunit protein uS7 (Herpetosiphon aurantiacus (strain ATCC 23779 / DSM 785 / 114-95)).